The chain runs to 246 residues: UDP-N-acetyl-D-mannosaminuronic acid transferase (246 aa).

Belongs to the glycosyltransferase 26 family.

It carries out the reaction UDP-N-acetyl-alpha-D-mannosaminouronate + N-acetyl-alpha-D-glucosaminyl-di-trans,octa-cis-undecaprenyl diphosphate = beta-D-ManNAcA-(1-&gt;4)-alpha-D-GlcNAc-di-trans,octa-cis-undecaprenyl diphosphate + UDP + H(+). The protein operates within bacterial outer membrane biogenesis; enterobacterial common antigen biosynthesis. Functionally, catalyzes the synthesis of Und-PP-GlcNAc-ManNAcA (Lipid II), the second lipid-linked intermediate involved in enterobacterial common antigen (ECA) synthesis. The chain is UDP-N-acetyl-D-mannosaminuronic acid transferase from Escherichia coli (strain 55989 / EAEC).